Consider the following 173-residue polypeptide: ATP-dependent protease subunit HslV (173 aa).

Residue T2 is part of the active site. G157, C160, and T163 together coordinate Na(+).

This sequence belongs to the peptidase T1B family. HslV subfamily. A double ring-shaped homohexamer of HslV is capped on each side by a ring-shaped HslU homohexamer. The assembly of the HslU/HslV complex is dependent on binding of ATP.

Its subcellular location is the cytoplasm. The catalysed reaction is ATP-dependent cleavage of peptide bonds with broad specificity.. With respect to regulation, allosterically activated by HslU binding. Functionally, protease subunit of a proteasome-like degradation complex believed to be a general protein degrading machinery. This is ATP-dependent protease subunit HslV from Nitrosomonas eutropha (strain DSM 101675 / C91 / Nm57).